A 72-amino-acid polypeptide reads, in one-letter code: Putative membrane protein insertion efficiency factor (72 aa).

This sequence belongs to the UPF0161 family.

The protein resides in the cell inner membrane. Its function is as follows. Could be involved in insertion of integral membrane proteins into the membrane. In Trichodesmium erythraeum (strain IMS101), this protein is Putative membrane protein insertion efficiency factor.